The primary structure comprises 78 residues: Large ribosomal subunit protein uL24 (78 aa).

Belongs to the universal ribosomal protein uL24 family. As to quaternary structure, part of the 50S ribosomal subunit.

One of two assembly initiator proteins, it binds directly to the 5'-end of the 23S rRNA, where it nucleates assembly of the 50S subunit. In terms of biological role, one of the proteins that surrounds the polypeptide exit tunnel on the outside of the subunit. This is Large ribosomal subunit protein uL24 from Campylobacter curvus (strain 525.92).